Consider the following 993-residue polypeptide: MPALARDGGQLPLLVVFSAMIFGTITNQDLPVIKCVLINHKNNDSSVGKSSSYPMVSESPEDLGCALRPQSSGTVYEAAAVEVDVSASITLQVLVDAPGNISCLWVFKHSSLNCQPHFDLQNRGVVSMVILKMTETQAGEYLLFIQSEATNYTILFTVSIRNTLLYTLRRPYFRKMENQDALVCISESVPEPIVEWVLCDSQGESCKEESPAVVKKEEKVLHELFGTDIRCCARNELGRECTRLFTIDLNQTPQTTLPQLFLKVGEPLWIRCKAVHVNHGFGLTWELENKALEEGNYFEMSTYSTNRTMIRILFAFVSSVARNDTGYYTCSSSKHPSQSALVTIVEKGFINATNSSEDYEIDQYEEFCFSVRFKAYPQIRCTWTFSRKSFPCEQKGLDNGYSISKFCNHKHQPGEYIFHAENDDAQFTKMFTLNIRRKPQVLAEASASQASCFSDGYPLPSWTWKKCSDKSPNCTEEITEGVWNRKANRKVFGQWVSSSTLNMSEAIKGFLVKCCAYNSLGTSCETILLNSPGPFPFIQDNISFYATIGVCLLFIVVLTLLICHKYKKQFRYESQLQMVQVTGSSDNEYFYVDFREYEYDLKWEFPRENLEFGKVLGSGAFGKVMNATAYGISKTGVSIQVAVKMLKEKADSSEREALMSELKMMTQLGSHENIVNLLGACTLSGPIYLIFEYCCYGDLLNYLRSKREKFHRTWTEIFKEHNFSFYPTFQSHPNSSMPGSREVQIHPDSDQISGLHGNSFHSEDEIEYENQKRLEEEEDLNVLTFEDLLCFAYQVAKGMEFLEFKSCVHRDLAARNVLVTHGKVVKICDFGLARDIMSDSNYVVRGNARLPVKWMAPESLFEGIYTIKSDVWSYGILLWEIFSLGVNPYPGIPVDANFYKLIQNGFKMDQPFYATEEIYIIMQSCWAFDSRKRPSFPNLTSFLGCQLADAEEAMYQNVDGRVSECPHTYQNRRPFSREMDLGLLSPQAQVEDS.

The signal sequence occupies residues 1-26; sequence MPALARDGGQLPLLVVFSAMIFGTIT. Topologically, residues 27 to 543 are extracellular; that stretch reads NQDLPVIKCV…PFPFIQDNIS (517 aa). A disulfide bridge connects residues Cys-35 and Cys-65. N-linked (GlcNAc...) asparagine glycosylation is found at Asn-43 and Asn-100. Residues Cys-103 and Cys-114 are joined by a disulfide bond. A glycan (N-linked (GlcNAc...) asparagine) is linked at Asn-151. 3 disulfides stabilise this stretch: Cys-199-Cys-206, Cys-232-Cys-241, and Cys-272-Cys-330. An Ig-like C2-type domain is found at 253-343; it reads PQTTLPQLFL…KHPSQSALVT (91 aa). N-linked (GlcNAc...) asparagine glycosylation is found at Asn-306, Asn-323, Asn-351, and Asn-354. Intrachain disulfides connect Cys-368–Cys-407 and Cys-381–Cys-392. Residues Asn-473, Asn-502, and Asn-541 are each glycosylated (N-linked (GlcNAc...) asparagine). A helical transmembrane segment spans residues 544 to 563; the sequence is FYATIGVCLLFIVVLTLLIC. The Cytoplasmic portion of the chain corresponds to 564-993; it reads HKYKKQFRYE…LSPQAQVEDS (430 aa). Tyr-572 carries the post-translational modification Phosphotyrosine. At Ser-574 the chain carries Phosphoserine. 3 positions are modified to phosphotyrosine; by autocatalysis: Tyr-589, Tyr-591, and Tyr-599. Residues 591 to 597 are important for normal regulation of the kinase activity and for maintaining the kinase in an inactive state in the absence of bound ligand; that stretch reads YVDFREY. Residues 610 to 943 enclose the Protein kinase domain; it reads LEFGKVLGSG…PSFPNLTSFL (334 aa). Residues 616–624 and Lys-644 contribute to the ATP site; that span reads LGSGAFGKV. Tyr-726 carries the phosphotyrosine; by autocatalysis modification. Position 759 is a phosphoserine (Ser-759). 2 positions are modified to phosphotyrosine: Tyr-768 and Tyr-793. Asp-811 serves as the catalytic Proton acceptor. 3 positions are modified to phosphotyrosine; by autocatalysis: Tyr-842, Tyr-955, and Tyr-969. Ser-993 carries the phosphoserine modification.

This sequence belongs to the protein kinase superfamily. Tyr protein kinase family. CSF-1/PDGF receptor subfamily. As to quaternary structure, monomer in the absence of bound FLT3LG. Homodimer in the presence of bound FLT3LG. Interacts with FIZ1 following ligand activation. Interacts with FES, FER, LYN, FGR, HCK, SRC and GRB2. Interacts with PTPRJ/DEP-1 and PTPN11/SHP2. Interacts with RNF115 and RNF126. (Microbial infection) Interacts with human cytomegalovirus protein UL7. N-glycosylated, contains complex N-glycans with sialic acid. In terms of processing, autophosphorylated on several tyrosine residues in response to FLT3LG binding. FLT3LG binding also increases phosphorylation of mutant kinases that are constitutively activated. Dephosphorylated by PTPRJ/DEP-1, PTPN1, PTPN6/SHP-1, and to a lesser degree by PTPN12. Dephosphorylation is important for export from the endoplasmic reticulum and location at the cell membrane. Post-translationally, rapidly ubiquitinated by UBE2L6 and the E3 ubiquitin-protein ligase SIAH1 after autophosphorylation, leading to its proteasomal degradation. In terms of tissue distribution, detected in bone marrow, in hematopoietic stem cells, in myeloid progenitor cells and in granulocyte/macrophage progenitor cells (at protein level). Detected in bone marrow, liver, thymus, spleen and lymph node, and at low levels in kidney and pancreas. Highly expressed in T-cell leukemia.

Its subcellular location is the membrane. It is found in the endoplasmic reticulum lumen. The catalysed reaction is L-tyrosyl-[protein] + ATP = O-phospho-L-tyrosyl-[protein] + ADP + H(+). With respect to regulation, present in an inactive conformation in the absence of bound ligand. FLT3LG binding leads to dimerization and activation by autophosphorylation. Its function is as follows. Tyrosine-protein kinase that acts as a cell-surface receptor for the cytokine FLT3LG and regulates differentiation, proliferation and survival of hematopoietic progenitor cells and of dendritic cells. Promotes phosphorylation of SHC1 and AKT1, and activation of the downstream effector MTOR. Promotes activation of RAS signaling and phosphorylation of downstream kinases, including MAPK1/ERK2 and/or MAPK3/ERK1. Promotes phosphorylation of FES, FER, PTPN6/SHP, PTPN11/SHP-2, PLCG1, and STAT5A and/or STAT5B. Activation of wild-type FLT3 causes only marginal activation of STAT5A or STAT5B. Mutations that cause constitutive kinase activity promote cell proliferation and resistance to apoptosis via the activation of multiple signaling pathways. This chain is Receptor-type tyrosine-protein kinase FLT3 (FLT3), found in Homo sapiens (Human).